Here is a 240-residue protein sequence, read N- to C-terminus: tRNA pseudouridine synthase A (240 aa).

Catalysis depends on Asp52, which acts as the Nucleophile. Tyr110 contributes to the substrate binding site.

The protein belongs to the tRNA pseudouridine synthase TruA family. In terms of assembly, homodimer.

The catalysed reaction is uridine(38/39/40) in tRNA = pseudouridine(38/39/40) in tRNA. Its function is as follows. Formation of pseudouridine at positions 38, 39 and 40 in the anticodon stem and loop of transfer RNAs. The chain is tRNA pseudouridine synthase A from Solibacter usitatus (strain Ellin6076).